The sequence spans 406 residues: Argininosuccinate synthase (406 aa).

ATP is bound by residues 13–21 (AYSGGLDTS) and Ala40. Residues Tyr91 and Ser96 each coordinate L-citrulline. Gly121 is a binding site for ATP. Positions 123, 127, and 128 each coordinate L-aspartate. L-citrulline is bound at residue Asn127. Arg131, Ser182, Ser191, Glu267, and Tyr279 together coordinate L-citrulline.

Belongs to the argininosuccinate synthase family. Type 1 subfamily. Homotetramer.

The protein localises to the cytoplasm. The enzyme catalyses L-citrulline + L-aspartate + ATP = 2-(N(omega)-L-arginino)succinate + AMP + diphosphate + H(+). The protein operates within amino-acid biosynthesis; L-arginine biosynthesis; L-arginine from L-ornithine and carbamoyl phosphate: step 2/3. The protein is Argininosuccinate synthase of Brucella suis biovar 1 (strain 1330).